We begin with the raw amino-acid sequence, 210 residues long: Large ribosomal subunit protein uL4 (210 aa).

A compositionally biased stretch (polar residues) spans 44–54 (KRQGTASTLTR). Residues 44–94 (KRQGTASTLTRSEVRGGGRKPYKQKGTGRARQGSIRTPLRPGGGVIFGPKP) are disordered. Over residues 60 to 71 (GGRKPYKQKGTG) the composition is skewed to basic residues.

It belongs to the universal ribosomal protein uL4 family. As to quaternary structure, part of the 50S ribosomal subunit.

Its function is as follows. One of the primary rRNA binding proteins, this protein initially binds near the 5'-end of the 23S rRNA. It is important during the early stages of 50S assembly. It makes multiple contacts with different domains of the 23S rRNA in the assembled 50S subunit and ribosome. Functionally, forms part of the polypeptide exit tunnel. The protein is Large ribosomal subunit protein uL4 of Prochlorococcus marinus subsp. pastoris (strain CCMP1986 / NIES-2087 / MED4).